The following is a 472-amino-acid chain: Argininosuccinate lyase (472 aa).

The protein belongs to the lyase 1 family. Argininosuccinate lyase subfamily.

Its subcellular location is the cytoplasm. It catalyses the reaction 2-(N(omega)-L-arginino)succinate = fumarate + L-arginine. It functions in the pathway amino-acid biosynthesis; L-arginine biosynthesis; L-arginine from L-ornithine and carbamoyl phosphate: step 3/3. This Polynucleobacter necessarius subsp. necessarius (strain STIR1) protein is Argininosuccinate lyase.